The primary structure comprises 1448 residues: Gag-Pol polyprotein (1448 aa).

A lipid anchor (N-myristoyl glycine; by host) is attached at Gly2. The short motif at 16–22 (LEKIRLR) is the Nuclear export signal element. A Nuclear localization signal motif is present at residues 26-32 (KKKYMLK). 2 disordered regions span residues 114 to 133 (TAET…GRGG) and 217 to 239 (QHPQ…IAGT). Over residues 119–128 (PKTSRPTAPS) the composition is skewed to polar residues. CCHC-type zinc fingers lie at residues 391–408 (IKCW…QCRA) and 412–429 (QGCW…KCPD). The interval 443–464 (EAPQFPHGSSASGADANCSPRG) is disordered. The Peptidase A2 domain maps to 517 to 586 (VEVLLDTGAD…TPINIFGRNL (70 aa)). The active-site For protease activity; shared with dimeric partner is the Asp522. The region spanning 640-830 (DGQLEEAPPT…PPFQWMGYEL (191 aa)) is the Reverse transcriptase domain. Mg(2+) is bound by residues Asp706, Asp781, and Asp782. The segment at 823–831 (FQWMGYELW) is RT 'primer grip'. A Tryptophan repeat motif motif is present at residues 993–1009 (WEQWWTDYWQVTWIPEW). The 124-residue stretch at 1029-1152 (IEGEETYYTD…IDHLVSQGIR (124 aa)) folds into the RNase H type-1 domain. Residues Asp1038 and Glu1073 each coordinate Mg(2+). The Integrase-type zinc finger occupies 1158–1199 (EKIEPAQEEHDKYHSNVKELVFKFGLPRIVARQIVDTCDKCH). Residues His1167, His1171, Cys1195, and Cys1198 each contribute to the Zn(2+) site. Positions 1209–1359 (VNSDLGTWQM…TPAERLINMI (151 aa)) constitute an Integrase catalytic domain. A Mg(2+)-binding site is contributed by Asp1219. A DNA-binding region (integrase-type) is located at residues 1378 to 1425 (FRVYYREGRDQLWKGPGELLWKGEGAVILKVGTDIKVVPRRKAKIIKD). The tract at residues 1426 to 1448 (YGGGKEVDSSSHMEDTGEAREVA) is disordered.

As to quaternary structure, homotrimer. Interacts with gp41 (via C-terminus). Homodimer. The active site consists of two apposed aspartic acid residues. In terms of assembly, heterodimer of p66 RT and p51 RT (RT p66/p51). Heterodimerization of RT is essential for DNA polymerase activity. Despite the sequence identities, p66 RT and p51 RT have distinct folding. As to quaternary structure, homotetramer; may further associate as a homohexadecamer. The cofactor is Mg(2+). In terms of processing, specific enzymatic cleavages by the viral protease yield mature proteins. The protease is released by autocatalytic cleavage. The polyprotein is cleaved during and after budding, this process is termed maturation. Proteolytic cleavage of p66 RT removes the RNase H domain to yield the p51 RT subunit. Post-translationally, capsid protein p24 is phosphorylated.

The protein resides in the virion. The protein localises to the host nucleus. It localises to the host cytoplasm. Its subcellular location is the host cell membrane. It catalyses the reaction Specific for a P1 residue that is hydrophobic, and P1' variable, but often Pro.. The enzyme catalyses Endohydrolysis of RNA in RNA/DNA hybrids. Three different cleavage modes: 1. sequence-specific internal cleavage of RNA. Human immunodeficiency virus type 1 and Moloney murine leukemia virus enzymes prefer to cleave the RNA strand one nucleotide away from the RNA-DNA junction. 2. RNA 5'-end directed cleavage 13-19 nucleotides from the RNA end. 3. DNA 3'-end directed cleavage 15-20 nucleotides away from the primer terminus.. The catalysed reaction is 3'-end directed exonucleolytic cleavage of viral RNA-DNA hybrid.. It carries out the reaction DNA(n) + a 2'-deoxyribonucleoside 5'-triphosphate = DNA(n+1) + diphosphate. The viral protease is inhibited by many synthetic protease inhibitors (PIs), such as amprenavir, atazanavir, indinavir, loprinavir, nelfinavir, ritonavir and saquinavir. RT can be inhibited either by nucleoside RT inhibitors (NRTIs) or by non nucleoside RT inhibitors (NNRTIs). NRTIs act as chain terminators, whereas NNRTIs inhibit DNA polymerization by binding a small hydrophobic pocket near the RT active site and inducing an allosteric change in this region. Classical NRTIs are abacavir, adefovir (PMEA), didanosine (ddI), lamivudine (3TC), stavudine (d4T), tenofovir (PMPA), zalcitabine (ddC), and zidovudine (AZT). Classical NNRTIs are atevirdine (BHAP U-87201E), delavirdine, efavirenz (DMP-266), emivirine (I-EBU), and nevirapine (BI-RG-587). The tritherapies used as a basic effective treatment of AIDS associate two NRTIs and one NNRTI. Use of protease inhibitors in tritherapy regimens permit more ambitious therapeutic strategies. Functionally, gag-Pol polyprotein and Gag polyprotein may regulate their own translation, by the binding genomic RNA in the 5'-UTR. At low concentration, Gag-Pol and Gag would promote translation, whereas at high concentration, the polyproteins encapsidate genomic RNA and then shut off translation. In terms of biological role, matrix protein p17 has two main functions: in infected cell, it targets Gag and Gag-pol polyproteins to the plasma membrane via a multipartite membrane-binding signal, that includes its myristointegration complex. The myristoylation signal and the NLS exert conflicting influences its subcellular localization. The key regulation of these motifs might be phosphorylation of a portion of MA molecules on the C-terminal tyrosine at the time of virus maturation, by virion-associated cellular tyrosine kinase. Implicated in the release from host cell mediated by Vpu. Its function is as follows. Capsid protein p24 forms the conical core that encapsulates the genomic RNA-nucleocapsid complex in the virion. The core is constituted by capsid protein hexamer subunits. The core is disassembled soon after virion entry. Interaction with host PPIA/CYPA protects the virus from restriction by host TRIM5-alpha and from an unknown antiviral activity in host cells. This capsid restriction by TRIM5 is one of the factors which restricts SIV to the simian species. Nucleocapsid protein p7 encapsulates and protects viral dimeric unspliced (genomic) RNA. Binds these RNAs through its zinc fingers. Facilitates rearangement of nucleic acid secondary structure during retrotranscription of genomic RNA. This capability is referred to as nucleic acid chaperone activity. Functionally, the aspartyl protease mediates proteolytic cleavages of Gag and Gag-Pol polyproteins during or shortly after the release of the virion from the plasma membrane. Cleavages take place as an ordered, step-wise cascade to yield mature proteins. This process is called maturation. Displays maximal activity during the budding process just prior to particle release from the cell. Also cleaves Nef and Vif, probably concomitantly with viral structural proteins on maturation of virus particles. Hydrolyzes host EIF4GI and PABP1 in order to shut off the capped cellular mRNA translation. The resulting inhibition of cellular protein synthesis serves to ensure maximal viral gene expression and to evade host immune response. In terms of biological role, reverse transcriptase/ribonuclease H (RT) is a multifunctional enzyme that converts the viral dimeric RNA genome into dsDNA in the cytoplasm, shortly after virus entry into the cell. This enzyme displays a DNA polymerase activity that can copy either DNA or RNA templates, and a ribonuclease H (RNase H) activity that cleaves the RNA strand of RNA-DNA heteroduplexes in a partially processive 3' to 5' endonucleasic mode. Conversion of viral genomic RNA into dsDNA requires many steps. A tRNA binds to the primer-binding site (PBS) situated at the 5'-end of the viral RNA. RT uses the 3' end of the tRNA primer to perform a short round of RNA-dependent minus-strand DNA synthesis. The reading proceeds through the U5 region and ends after the repeated (R) region which is present at both ends of viral RNA. The portion of the RNA-DNA heteroduplex is digested by the RNase H, resulting in a ssDNA product attached to the tRNA primer. This ssDNA/tRNA hybridizes with the identical R region situated at the 3' end of viral RNA. This template exchange, known as minus-strand DNA strong stop transfer, can be either intra- or intermolecular. RT uses the 3' end of this newly synthesized short ssDNA to perform the RNA-dependent minus-strand DNA synthesis of the whole template. RNase H digests the RNA template except for two polypurine tracts (PPTs) situated at the 5'-end and near the center of the genome. It is not clear if both polymerase and RNase H activities are simultaneous. RNase H can probably proceed both in a polymerase-dependent (RNA cut into small fragments by the same RT performing DNA synthesis) and a polymerase-independent mode (cleavage of remaining RNA fragments by free RTs). Secondly, RT performs DNA-directed plus-strand DNA synthesis using the PPTs that have not been removed by RNase H as primers. PPTs and tRNA primers are then removed by RNase H. The 3' and 5' ssDNA PBS regions hybridize to form a circular dsDNA intermediate. Strand displacement synthesis by RT to the PBS and PPT ends produces a blunt ended, linear dsDNA copy of the viral genome that includes long terminal repeats (LTRs) at both ends. Its function is as follows. Integrase catalyzes viral DNA integration into the host chromosome, by performing a series of DNA cutting and joining reactions. This enzyme activity takes place after virion entry into a cell and reverse transcription of the RNA genome in dsDNA. The first step in the integration process is 3' processing. This step requires a complex comprising the viral genome, matrix protein, Vpr and integrase. This complex is called the pre-integration complex (PIC). The integrase protein removes 2 nucleotides from each 3' end of the viral DNA, leaving recessed CA OH's at the 3' ends. In the second step, the PIC enters cell nucleus. This process is mediated through integrase and Vpr proteins, and allows the virus to infect a non dividing cell. This ability to enter the nucleus is specific of lentiviruses, other retroviruses cannot and rely on cell division to access cell chromosomes. In the third step, termed strand transfer, the integrase protein joins the previously processed 3' ends to the 5' ends of strands of target cellular DNA at the site of integration. The 5'-ends are produced by integrase-catalyzed staggered cuts, 5 bp apart. A Y-shaped, gapped, recombination intermediate results, with the 5'-ends of the viral DNA strands and the 3' ends of target DNA strands remaining unjoined, flanking a gap of 5 bp. The last step is viral DNA integration into host chromosome. This involves host DNA repair synthesis in which the 5 bp gaps between the unjoined strands are filled in and then ligated. Since this process occurs at both cuts flanking the SIV genome, a 5 bp duplication of host DNA is produced at the ends of SIV integration. Alternatively, Integrase may catalyze the excision of viral DNA just after strand transfer, this is termed disintegration. This Simian immunodeficiency virus (isolate Mm251) (SIV-mac) protein is Gag-Pol polyprotein (gag-pol).